Reading from the N-terminus, the 578-residue chain is Longifolene synthase (578 aa).

Mg(2+) is bound by residues Asp-331, Asp-335, and Asp-475. The DDXXD motif motif lies at 331-335; the sequence is DDLYD.

The protein belongs to the terpene synthase family. Tpsd subfamily. Mg(2+) is required as a cofactor. The cofactor is Mn(2+).

The enzyme catalyses (2E,6E)-farnesyl diphosphate = longifolene + diphosphate. It participates in sesquiterpene biosynthesis. It functions in the pathway terpene metabolism; oleoresin biosynthesis. In terms of biological role, terpene synthase (TPS) involved in the biosynthesis of sesquiterpene natural products included in conifer oleoresin secretions and volatile emissions; these compounds contribute to biotic and abiotic stress defense against herbivores and pathogens. Catalyzes the conversion of (2E,6E)-farnesyl diphosphate (FPP) to longifolene. The protein is Longifolene synthase of Picea engelmannii x Picea glauca (Hybrid white spruce).